The chain runs to 149 residues: Transcriptional repressor NrdR (149 aa).

Residues 3 to 34 (CPFCDTEETKVIDSRLVSDGYQVRRRRECGHC) fold into a zinc finger. An ATP-cone domain is found at 49 to 139 (PKIIKTDGTR…VYLSFDDIDQ (91 aa)).

It belongs to the NrdR family. Zn(2+) is required as a cofactor.

Negatively regulates transcription of bacterial ribonucleotide reductase nrd genes and operons by binding to NrdR-boxes. This Haemophilus influenzae (strain PittEE) protein is Transcriptional repressor NrdR.